A 355-amino-acid polypeptide reads, in one-letter code: UDP-N-acetylglucosamine--N-acetylmuramyl-(pentapeptide) pyrophosphoryl-undecaprenol N-acetylglucosamine transferase (355 aa).

UDP-N-acetyl-alpha-D-glucosamine-binding positions include 15–17 (TGG), Asn127, Arg163, Ser191, Ile244, 263–268 (ALTVSE), and Gln288.

Belongs to the glycosyltransferase 28 family. MurG subfamily.

Its subcellular location is the cell inner membrane. The enzyme catalyses di-trans,octa-cis-undecaprenyl diphospho-N-acetyl-alpha-D-muramoyl-L-alanyl-D-glutamyl-meso-2,6-diaminopimeloyl-D-alanyl-D-alanine + UDP-N-acetyl-alpha-D-glucosamine = di-trans,octa-cis-undecaprenyl diphospho-[N-acetyl-alpha-D-glucosaminyl-(1-&gt;4)]-N-acetyl-alpha-D-muramoyl-L-alanyl-D-glutamyl-meso-2,6-diaminopimeloyl-D-alanyl-D-alanine + UDP + H(+). Its pathway is cell wall biogenesis; peptidoglycan biosynthesis. Its function is as follows. Cell wall formation. Catalyzes the transfer of a GlcNAc subunit on undecaprenyl-pyrophosphoryl-MurNAc-pentapeptide (lipid intermediate I) to form undecaprenyl-pyrophosphoryl-MurNAc-(pentapeptide)GlcNAc (lipid intermediate II). The sequence is that of UDP-N-acetylglucosamine--N-acetylmuramyl-(pentapeptide) pyrophosphoryl-undecaprenol N-acetylglucosamine transferase from Citrobacter koseri (strain ATCC BAA-895 / CDC 4225-83 / SGSC4696).